We begin with the raw amino-acid sequence, 302 residues long: Aspartate carbamoyltransferase catalytic subunit (302 aa).

R53 and T54 together coordinate carbamoyl phosphate. K82 is an L-aspartate binding site. 3 residues coordinate carbamoyl phosphate: R103, H131, and Q134. Residues R164 and R223 each coordinate L-aspartate. Carbamoyl phosphate contacts are provided by L260 and P261.

The protein belongs to the aspartate/ornithine carbamoyltransferase superfamily. ATCase family. As to quaternary structure, heterooligomer of catalytic and regulatory chains.

It catalyses the reaction carbamoyl phosphate + L-aspartate = N-carbamoyl-L-aspartate + phosphate + H(+). It functions in the pathway pyrimidine metabolism; UMP biosynthesis via de novo pathway; (S)-dihydroorotate from bicarbonate: step 2/3. Its function is as follows. Catalyzes the condensation of carbamoyl phosphate and aspartate to form carbamoyl aspartate and inorganic phosphate, the committed step in the de novo pyrimidine nucleotide biosynthesis pathway. The chain is Aspartate carbamoyltransferase catalytic subunit from Methanococcus maripaludis (strain DSM 14266 / JCM 13030 / NBRC 101832 / S2 / LL).